The following is a 357-amino-acid chain: tRNA-specific 2-thiouridylase MnmA (357 aa).

ATP is bound by residues alanine 6–serine 13 and leucine 32. Residue cysteine 101 is the Nucleophile of the active site. Residues cysteine 101 and cysteine 193 are joined by a disulfide bond. Glycine 125 is an ATP binding site. The segment at lysine 143–glutamine 145 is interaction with tRNA. Cysteine 193 serves as the catalytic Cysteine persulfide intermediate.

Belongs to the MnmA/TRMU family.

It is found in the cytoplasm. It carries out the reaction S-sulfanyl-L-cysteinyl-[protein] + uridine(34) in tRNA + AH2 + ATP = 2-thiouridine(34) in tRNA + L-cysteinyl-[protein] + A + AMP + diphosphate + H(+). Its function is as follows. Catalyzes the 2-thiolation of uridine at the wobble position (U34) of tRNA, leading to the formation of s(2)U34. The sequence is that of tRNA-specific 2-thiouridylase MnmA from Mycolicibacterium gilvum (strain PYR-GCK) (Mycobacterium gilvum (strain PYR-GCK)).